The sequence spans 378 residues: Succinate--CoA ligase [ADP-forming] subunit beta (378 aa).

The ATP-grasp domain occupies 9 to 237; it reads RDIVARYGIP…IAGEPESEIK (229 aa). ATP contacts are provided by residues Lys45, 52–54, Ile94, and Glu99; that span reads GRG. Asn192 and Asp206 together coordinate Mg(2+). Substrate is bound by residues Asn257 and 314-316; that span reads GIT.

It belongs to the succinate/malate CoA ligase beta subunit family. As to quaternary structure, heterotetramer of two alpha and two beta subunits. Mg(2+) serves as cofactor.

The catalysed reaction is succinate + ATP + CoA = succinyl-CoA + ADP + phosphate. The enzyme catalyses GTP + succinate + CoA = succinyl-CoA + GDP + phosphate. It participates in carbohydrate metabolism; tricarboxylic acid cycle; succinate from succinyl-CoA (ligase route): step 1/1. Its function is as follows. Succinyl-CoA synthetase functions in the citric acid cycle (TCA), coupling the hydrolysis of succinyl-CoA to the synthesis of either ATP or GTP and thus represents the only step of substrate-level phosphorylation in the TCA. The beta subunit provides nucleotide specificity of the enzyme and binds the substrate succinate, while the binding sites for coenzyme A and phosphate are found in the alpha subunit. The polypeptide is Succinate--CoA ligase [ADP-forming] subunit beta (Herpetosiphon aurantiacus (strain ATCC 23779 / DSM 785 / 114-95)).